The following is a 335-amino-acid chain: UPF0353 protein Mvan_2751 (335 aa).

2 helical membrane passes run 18-38 (WFFL…IVQM) and 67-87 (LPAV…AGPT). The 197-residue stretch at 98 to 294 (VVMLVIDVSQ…EQLKQVFTNL (197 aa)) folds into the VWFA domain. The chain crosses the membrane as a helical span at residues 309-329 (VGWLRIGSLVLALAALGALLI).

It belongs to the UPF0353 family.

The protein localises to the cell membrane. In Mycolicibacterium vanbaalenii (strain DSM 7251 / JCM 13017 / BCRC 16820 / KCTC 9966 / NRRL B-24157 / PYR-1) (Mycobacterium vanbaalenii), this protein is UPF0353 protein Mvan_2751.